The following is a 173-amino-acid chain: Ferritin, lower subunit (173 aa).

The 150-residue stretch at 7-156 (QNFHQDCEAG…DHITSLKKLW (150 aa)) folds into the Ferritin-like diiron domain. Fe cation contacts are provided by E59 and H62.

This sequence belongs to the ferritin family. As to quaternary structure, oligomer of 24 subunits. The functional molecule is roughly spherical and contains a central cavity into which the polymeric mineral iron core is deposited.

Its function is as follows. Stores iron in a soluble, non-toxic, readily available form. Important for iron homeostasis. Iron is taken up in the ferrous form and deposited as ferric hydroxides after oxidation. This chain is Ferritin, lower subunit, found in Aquarana catesbeiana (American bullfrog).